Consider the following 427-residue polypeptide: 3-phosphoshikimate 1-carboxyvinyltransferase (427 aa).

Lysine 22, serine 23, and arginine 27 together coordinate 3-phosphoshikimate. Lysine 22 provides a ligand contact to phosphoenolpyruvate. Phosphoenolpyruvate is bound by residues glycine 96 and arginine 124. 3-phosphoshikimate-binding residues include serine 169, serine 170, glutamine 171, serine 197, aspartate 313, asparagine 336, and lysine 340. Residue glutamine 171 participates in phosphoenolpyruvate binding. Aspartate 313 serves as the catalytic Proton acceptor. Arginine 344, arginine 386, and lysine 411 together coordinate phosphoenolpyruvate.

It belongs to the EPSP synthase family. As to quaternary structure, monomer.

The protein resides in the cytoplasm. It catalyses the reaction 3-phosphoshikimate + phosphoenolpyruvate = 5-O-(1-carboxyvinyl)-3-phosphoshikimate + phosphate. It participates in metabolic intermediate biosynthesis; chorismate biosynthesis; chorismate from D-erythrose 4-phosphate and phosphoenolpyruvate: step 6/7. Catalyzes the transfer of the enolpyruvyl moiety of phosphoenolpyruvate (PEP) to the 5-hydroxyl of shikimate-3-phosphate (S3P) to produce enolpyruvyl shikimate-3-phosphate and inorganic phosphate. The protein is 3-phosphoshikimate 1-carboxyvinyltransferase of Escherichia coli (strain SMS-3-5 / SECEC).